Consider the following 281-residue polypeptide: Ribosomal RNA small subunit methyltransferase A (281 aa).

S-adenosyl-L-methionine contacts are provided by N36, L38, G63, E84, D109, and N127.

This sequence belongs to the class I-like SAM-binding methyltransferase superfamily. rRNA adenine N(6)-methyltransferase family. RsmA subfamily.

The protein resides in the cytoplasm. It catalyses the reaction adenosine(1518)/adenosine(1519) in 16S rRNA + 4 S-adenosyl-L-methionine = N(6)-dimethyladenosine(1518)/N(6)-dimethyladenosine(1519) in 16S rRNA + 4 S-adenosyl-L-homocysteine + 4 H(+). In terms of biological role, specifically dimethylates two adjacent adenosines (A1518 and A1519) in the loop of a conserved hairpin near the 3'-end of 16S rRNA in the 30S particle. May play a critical role in biogenesis of 30S subunits. This is Ribosomal RNA small subunit methyltransferase A from Borreliella afzelii (strain PKo) (Borrelia afzelii).